The sequence spans 296 residues: Small ribosomal subunit biogenesis GTPase RsgA (296 aa).

The region spanning 65–226 (TNELIRPPIS…VADTPGFSSL (162 aa)) is the CP-type G domain. GTP contacts are provided by residues 114–117 (TKMD) and 169–177 (GQSGVGKSS). Zn(2+)-binding residues include Cys250, Cys255, His257, and Cys263.

The protein belongs to the TRAFAC class YlqF/YawG GTPase family. RsgA subfamily. Monomer. Associates with 30S ribosomal subunit, binds 16S rRNA. Zn(2+) is required as a cofactor.

Its subcellular location is the cytoplasm. In terms of biological role, one of several proteins that assist in the late maturation steps of the functional core of the 30S ribosomal subunit. Helps release RbfA from mature subunits. May play a role in the assembly of ribosomal proteins into the subunit. Circularly permuted GTPase that catalyzes slow GTP hydrolysis, GTPase activity is stimulated by the 30S ribosomal subunit. In Bacillus velezensis (strain DSM 23117 / BGSC 10A6 / LMG 26770 / FZB42) (Bacillus amyloliquefaciens subsp. plantarum), this protein is Small ribosomal subunit biogenesis GTPase RsgA.